A 411-amino-acid chain; its full sequence is MAAISPANATTAASLSLPQFSSTSSSLSSSSSPSFLNFKTASVSNRCIKCGVRSLENHSGHRSLDFLSNGDPISLINPNSSSPITMAAATSESGSKSSKRVCLFHSDETRDLAERIVAKSDCIELRSINWKKFDDGFPNLFIQNAQGIRGQHVAFLASFSSPAVIFEQLSVIYALPKLFVSSFTLVLPFFPTGTSERMEDEGDVATAFTLARILSNIPTSRGGPTSLVTFDIHALQERFYFGDTILPCFESGIPLLKSRLQSLPDSDNISIAFPDDGAWKRFHKQLQHYPTIVCNKVRMGDKRIVRIKEGDAEGRHVVIVDDLVQSGGTLIECQKVLAAHGAAKISAYVTHGIFPRSSWKRFKLDTKGDPAEGLSYFWITDSCGMTVKEVMNKPPFEVLSLAGSIASALQV.

A chloroplast-targeting transit peptide spans 1 to 39; that stretch reads MAAISPANATTAASLSLPQFSSTSSSLSSSSSPSFLNFK. 2 residues coordinate Mg(2+): D231 and H233. Positions 314-329 are binding of phosphoribosylpyrophosphate; that stretch reads GRHVVIVDDLVQSGGT.

This sequence belongs to the ribose-phosphate pyrophosphokinase family.

The protein resides in the plastid. Its subcellular location is the chloroplast. The enzyme catalyses D-ribose 5-phosphate + ATP = 5-phospho-alpha-D-ribose 1-diphosphate + AMP + H(+). In Arabidopsis thaliana (Mouse-ear cress), this protein is Ribose-phosphate pyrophosphokinase 3, chloroplastic (PRS3).